We begin with the raw amino-acid sequence, 163 residues long: Epithelial membrane protein 3 (163 aa).

Residues 4–24 form a helical membrane-spanning segment; that stretch reads LLLVVSALHILILVLLFVATL. 2 N-linked (GlcNAc...) asparagine glycosylation sites follow: Asn-46 and Asn-56. Transmembrane regions (helical) follow at residues 66–86, 100–120, and 139–159; these read VQAL…LFMI, TGLC…IYAI, and FALA…YIHL.

Belongs to the PMP-22/EMP/MP20 family.

The protein localises to the membrane. Functionally, probably involved in cell proliferation and cell-cell interactions. This is Epithelial membrane protein 3 (Emp3) from Rattus norvegicus (Rat).